The primary structure comprises 529 residues: N5-hydroxyornithine acetylase sidL (529 aa).

Disordered regions lie at residues 59–95 (ASVN…VRPF) and 239–258 (SPWP…SPVA). H462 provides a ligand contact to substrate. The active-site Proton acceptor is the E498.

It belongs to the lysine N-acyltransferase mbtK family.

The protein resides in the cytoplasm. It localises to the cytosol. Its pathway is siderophore biosynthesis. In terms of biological role, acyltransferase; part of the gene cluster that mediates the biosynthesis of at least 11 siderophores, including beauverichelin A, dimerumic acid (DA), Na-dimethyl coprogen (NADC), eleutherazine B, ferricrocin (FC), fusarinine A, fusarinine C (FsC), metachelin A, mevalonolactone, rhodotorulic acid (RA) and tenellin. This cocktail of siderophores for iron metabolism is essential for virulence, and more specifically for the fungal virulence in penetrating through the host cuticle. Siderophore synthesis is also involved in conidial germination under iron-deficient conditions. SIDL contributes to partial production of ferricrocin under iron-limiting conditions via the acetylation of N(5)-hydroxyornithine. The polypeptide is N5-hydroxyornithine acetylase sidL (Beauveria bassiana (strain ARSEF 2860) (White muscardine disease fungus)).